The chain runs to 101 residues: Aspartyl/glutamyl-tRNA(Asn/Gln) amidotransferase subunit C (101 aa).

The protein belongs to the GatC family. In terms of assembly, heterotrimer of A, B and C subunits.

It carries out the reaction L-glutamyl-tRNA(Gln) + L-glutamine + ATP + H2O = L-glutaminyl-tRNA(Gln) + L-glutamate + ADP + phosphate + H(+). The catalysed reaction is L-aspartyl-tRNA(Asn) + L-glutamine + ATP + H2O = L-asparaginyl-tRNA(Asn) + L-glutamate + ADP + phosphate + 2 H(+). Its function is as follows. Allows the formation of correctly charged Asn-tRNA(Asn) or Gln-tRNA(Gln) through the transamidation of misacylated Asp-tRNA(Asn) or Glu-tRNA(Gln) in organisms which lack either or both of asparaginyl-tRNA or glutaminyl-tRNA synthetases. The reaction takes place in the presence of glutamine and ATP through an activated phospho-Asp-tRNA(Asn) or phospho-Glu-tRNA(Gln). In Enterococcus faecalis (strain ATCC 700802 / V583), this protein is Aspartyl/glutamyl-tRNA(Asn/Gln) amidotransferase subunit C.